The following is a 167-amino-acid chain: Brain ribonuclease (167 aa).

An N-terminal signal peptide occupies residues 1–26 (MALKSLVLLSLLVLVLLLVQVQPSLG). Substrate-binding residues include Lys33 and Arg36. Catalysis depends on His38, which acts as the Proton acceptor. 4 disulfides stabilise this stretch: Cys52–Cys110, Cys66–Cys121, Cys84–Cys136, and Cys91–Cys98. Substrate is bound at residue 67–71 (KPVNT). N-linked (GlcNAc...) asparagine glycosylation is present at Asn88. Substrate-binding residues include Lys92 and Arg111. His145 (proton donor) is an active-site residue. Thr155 carries O-linked (GalNAc...) threonine glycosylation. Residue Ser159 is glycosylated (O-linked (GalNAc...) serine).

The protein belongs to the pancreatic ribonuclease family.

It is found in the secreted. This is Brain ribonuclease (BRN) from Bos taurus (Bovine).